Here is an 88-residue protein sequence, read N- to C-terminus: Cell division topological specificity factor (88 aa).

Belongs to the MinE family.

In terms of biological role, prevents the cell division inhibition by proteins MinC and MinD at internal division sites while permitting inhibition at polar sites. This ensures cell division at the proper site by restricting the formation of a division septum at the midpoint of the long axis of the cell. This is Cell division topological specificity factor from Aeromonas salmonicida (strain A449).